Reading from the N-terminus, the 406-residue chain is Outer membrane protein assembly factor BamB (406 aa).

The N-terminal stretch at 1 to 23 (MMKQVDMYKRVALIALMGMSLAG) is a signal peptide. Residue Cys24 is the site of N-palmitoyl cysteine attachment. A lipid anchor (S-diacylglycerol cysteine) is attached at Cys24.

It belongs to the BamB family. As to quaternary structure, part of the Bam complex.

The protein resides in the cell outer membrane. In terms of biological role, part of the outer membrane protein assembly complex, which is involved in assembly and insertion of beta-barrel proteins into the outer membrane. This Xanthomonas campestris pv. campestris (strain ATCC 33913 / DSM 3586 / NCPPB 528 / LMG 568 / P 25) protein is Outer membrane protein assembly factor BamB.